The following is a 152-amino-acid chain: 3-hydroxyacyl-[acyl-carrier-protein] dehydratase FabZ (152 aa).

H54 is an active-site residue.

Belongs to the thioester dehydratase family. FabZ subfamily.

It localises to the cytoplasm. The catalysed reaction is a (3R)-hydroxyacyl-[ACP] = a (2E)-enoyl-[ACP] + H2O. Its function is as follows. Involved in unsaturated fatty acids biosynthesis. Catalyzes the dehydration of short chain beta-hydroxyacyl-ACPs and long chain saturated and unsaturated beta-hydroxyacyl-ACPs. In Shewanella woodyi (strain ATCC 51908 / MS32), this protein is 3-hydroxyacyl-[acyl-carrier-protein] dehydratase FabZ.